The chain runs to 364 residues: Large ribosomal subunit protein bL27m (364 aa).

The N-terminal 19 residues, 1-19 (MFSSSWQQVPKFVVQQVRT), are a transit peptide targeting the mitochondrion.

It belongs to the bacterial ribosomal protein bL27 family.

The protein resides in the mitochondrion. Its function is as follows. Component of the large subunit of mitochondrial ribosome. This is Large ribosomal subunit protein bL27m (MRPL2) from Kluyveromyces lactis (strain ATCC 8585 / CBS 2359 / DSM 70799 / NBRC 1267 / NRRL Y-1140 / WM37) (Yeast).